A 427-amino-acid polypeptide reads, in one-letter code: 3-phosphoshikimate 1-carboxyvinyltransferase (427 aa).

3-phosphoshikimate contacts are provided by Lys22, Ser23, and Arg27. Lys22 serves as a coordination point for phosphoenolpyruvate. Gly96 and Arg124 together coordinate phosphoenolpyruvate. Positions 169, 170, 171, 197, 313, 336, and 340 each coordinate 3-phosphoshikimate. Residue Gln171 participates in phosphoenolpyruvate binding. The Proton acceptor role is filled by Asp313. Phosphoenolpyruvate-binding residues include Arg344, Arg386, and Lys411.

The protein belongs to the EPSP synthase family. Monomer.

Its subcellular location is the cytoplasm. It catalyses the reaction 3-phosphoshikimate + phosphoenolpyruvate = 5-O-(1-carboxyvinyl)-3-phosphoshikimate + phosphate. It participates in metabolic intermediate biosynthesis; chorismate biosynthesis; chorismate from D-erythrose 4-phosphate and phosphoenolpyruvate: step 6/7. Its function is as follows. Catalyzes the transfer of the enolpyruvyl moiety of phosphoenolpyruvate (PEP) to the 5-hydroxyl of shikimate-3-phosphate (S3P) to produce enolpyruvyl shikimate-3-phosphate and inorganic phosphate. This chain is 3-phosphoshikimate 1-carboxyvinyltransferase, found in Enterobacter sp. (strain 638).